The sequence spans 270 residues: Phosphatidate cytidylyltransferase (270 aa).

7 helical membrane passes run Leu19–Ala39, Thr53–Leu73, Gly76–Trp96, Gly101–Arg121, Phe126–Tyr146, Leu183–Leu203, and Ala248–Phe268.

It belongs to the CDS family.

The protein localises to the cell inner membrane. The enzyme catalyses a 1,2-diacyl-sn-glycero-3-phosphate + CTP + H(+) = a CDP-1,2-diacyl-sn-glycerol + diphosphate. It functions in the pathway phospholipid metabolism; CDP-diacylglycerol biosynthesis; CDP-diacylglycerol from sn-glycerol 3-phosphate: step 3/3. The polypeptide is Phosphatidate cytidylyltransferase (cdsA) (Brucella abortus (strain 2308)).